Reading from the N-terminus, the 1017-residue chain is Sodium/potassium-transporting ATPase subunit alpha-2 (1017 aa).

Residues 1 to 31 form a disordered region; sequence MDGREYSPAATTSENGGGRRKQKEKELDELK. Residues 1–82 lie on the Cytoplasmic side of the membrane; it reads MDGREYSPAA…NALTPPPTTP (82 aa). Residues 77–79 are interaction with phosphoinositide-3 kinase; that stretch reads PPP. A helical membrane pass occupies residues 83 to 103; that stretch reads EWVKFCRQLFGGFSILLWIGA. Over 104–126 the chain is Extracellular; the sequence is ILCFLAYGIQAAMEDEPSNDNLY. Residues 127-147 traverse the membrane as a helical segment; the sequence is LGVVLAAVVIVTGCFSYYQEA. Residues 148–283 are Cytoplasmic-facing; sequence KSSKIMDSFK…VGRTPIAMEI (136 aa). The disordered stretch occupies residues 207 to 228; that stretch reads KVDNSSLTGESEPQTRSPEFTH. Polar residues predominate over residues 209–224; that stretch reads DNSSLTGESEPQTRSP. A helical transmembrane segment spans residues 284–303; sequence EHFIRLITGVAVFLGLSFFI. Over 304–315 the chain is Extracellular; sequence LSLILGYTWLEA. The chain crosses the membrane as a helical span at residues 316–333; that stretch reads VIFLIGIIVANVPEGLLA. Topologically, residues 334–766 are cytoplasmic; that stretch reads TVTVCLTLTA…EEGRLIFDNL (433 aa). D371 acts as the 4-aspartylphosphate intermediate in catalysis. K502 is an ATP binding site. Mg(2+)-binding residues include D711 and D715. The chain crosses the membrane as a helical span at residues 767–786; sequence KKSIAYTLTSNIPEITPFLL. Over 787–796 the chain is Extracellular; the sequence is FIIANIPLPL. A helical transmembrane segment spans residues 797–817; the sequence is GTVTILCIDLGTDMVPAISLA. At 818–837 the chain is on the cytoplasmic side; it reads YEAAESDIMKRQPRNPRTDK. Residues 838 to 860 traverse the membrane as a helical segment; that stretch reads LVNERLISMAYGQIGMIQALGGF. Residues 861 to 912 lie on the Extracellular side of the membrane; that stretch reads FTYFVILAENGFLPARLLGVRLAWDDRSTNDLEDSYGQEWTYEQRKVVEFTC. The chain crosses the membrane as a helical span at residues 913-932; sequence HTAFFASIVVVQWADLIICK. The Cytoplasmic segment spans residues 933–945; the sequence is TRRNSVFQQGMKN. S937 is subject to Phosphoserine; by PKA. A helical transmembrane segment spans residues 946–964; the sequence is KILIFGLLEETALAAFLSY. Topologically, residues 965–979 are extracellular; it reads CPGMGVALRMYPLKV. A helical membrane pass occupies residues 980-1000; it reads TWWFCAFPYSLLIFAYDEVRK. The Cytoplasmic portion of the chain corresponds to 1001 to 1017; sequence LILRRYPGGWVEKETYY.

The protein belongs to the cation transport ATPase (P-type) (TC 3.A.3) family. Type IIC subfamily. In terms of assembly, the sodium/potassium-transporting ATPase is composed of a catalytic alpha subunit, an auxiliary non-catalytic beta subunit and an additional regulatory subunit.

Its subcellular location is the membrane. The protein resides in the cell membrane. The enzyme catalyses K(+)(out) + Na(+)(in) + ATP + H2O = K(+)(in) + Na(+)(out) + ADP + phosphate + H(+). In terms of biological role, this is the catalytic component of the active enzyme, which catalyzes the hydrolysis of ATP coupled with the exchange of sodium and potassium ions across the plasma membrane. This action creates the electrochemical gradient of sodium and potassium ions, providing the energy for active transport of various nutrients. The sequence is that of Sodium/potassium-transporting ATPase subunit alpha-2 (ATP1A2) from Gallus gallus (Chicken).